We begin with the raw amino-acid sequence, 290 residues long: O-methyltransferase agiB (290 aa).

Asp155 is a binding site for S-adenosyl-L-methionine. His194 functions as the Proton acceptor in the catalytic mechanism.

Belongs to the class I-like SAM-binding methyltransferase superfamily. Cation-independent O-methyltransferase family.

It functions in the pathway secondary metabolite biosynthesis. In terms of biological role, O-methyltransferase; part of the gene cluster that mediates the biosynthesis of the aspergillicins A and F, 2 cryptic cyclic hexa-depsipeptides. The hexamodular NRPS agiA catalyzes the condensation of the six amino acid residues including N-Me-L-O-Me-tyrosine, L-proline 1, L-proline 2, D-isoleucine, O-acetyl-threonine, and L-isoleucine. The starting condensation domain (C1) of agiA probably loads acetyl-CoA which is condensed on the N-terminus of threonine by the first module to yield O-acetyl-threonine. The second module then loads L-isoleucine. The epimerase (E) domain on module 2 is probably involved in the formation of the D-isoleucine moiety. Modules 3 and 4 further load 2 successive L-prolines. Module 5 is then involved in the condensation of O-Me-L-tyrosine produced by the O-methyltransferase agiB and the N-methyl transferase (NMeT) domain on module 5 probably catalyzes the N-methylation to yield the N-Me-L-O-Me-tyrosine moiety. The A domain of module 5 loads preferentially O-Me-L-tyrosine, but it can also accept L-phenylalanine, which leads to the production of aspergillicin G. Module 6 then loads the last residue, L-isoleucine. The C-terminal thiolesterase (TE) domain probably cyclizes the peptide using the hydroxy group from threonine to form the cyclic depsipeptide. This chain is O-methyltransferase agiB, found in Aspergillus flavus (strain ATCC 200026 / FGSC A1120 / IAM 13836 / NRRL 3357 / JCM 12722 / SRRC 167).